We begin with the raw amino-acid sequence, 214 residues long: Ribosomal RNA small subunit methyltransferase G (214 aa).

Residues Gly-77, Leu-82, 128-129 (VE), and Arg-143 each bind S-adenosyl-L-methionine.

This sequence belongs to the methyltransferase superfamily. RNA methyltransferase RsmG family.

It localises to the cytoplasm. It carries out the reaction guanosine(527) in 16S rRNA + S-adenosyl-L-methionine = N(7)-methylguanosine(527) in 16S rRNA + S-adenosyl-L-homocysteine. Its function is as follows. Specifically methylates the N7 position of guanine in position 527 of 16S rRNA. This chain is Ribosomal RNA small subunit methyltransferase G, found in Nitrosococcus oceani (strain ATCC 19707 / BCRC 17464 / JCM 30415 / NCIMB 11848 / C-107).